The primary structure comprises 476 residues: Proline--tRNA ligase 2 (476 aa).

It belongs to the class-II aminoacyl-tRNA synthetase family. ProS type 3 subfamily. In terms of assembly, homodimer.

The protein resides in the cytoplasm. It catalyses the reaction tRNA(Pro) + L-proline + ATP = L-prolyl-tRNA(Pro) + AMP + diphosphate. In terms of biological role, catalyzes the attachment of proline to tRNA(Pro) in a two-step reaction: proline is first activated by ATP to form Pro-AMP and then transferred to the acceptor end of tRNA(Pro). The protein is Proline--tRNA ligase 2 of Bacillus cereus (strain ATCC 10987 / NRS 248).